Consider the following 169-residue polypeptide: Ureidoglycolate lyase (169 aa).

It belongs to the ureidoglycolate lyase family. As to quaternary structure, homodimer. Requires Ni(2+) as cofactor.

It catalyses the reaction (S)-ureidoglycolate = urea + glyoxylate. Its pathway is nitrogen metabolism; (S)-allantoin degradation. In terms of biological role, catalyzes the catabolism of the allantoin degradation intermediate (S)-ureidoglycolate, generating urea and glyoxylate. Involved in the utilization of allantoin as nitrogen source. This is Ureidoglycolate lyase from Brucella abortus biovar 1 (strain 9-941).